The primary structure comprises 140 residues: MAIERTFSMIKPDATKRNLTGAITKMLEDAGLRVVASKRVWMSRREAEGFYAVHKERPFFGELVEFMSSGPTIVQVLEGENAIAKNREVMGATNPANADEGTIRKVHALSIGENSVHGSDGPETAAEEIAYWFAGTEIVG.

Residues K11, F59, R87, T93, R104, and N114 each coordinate ATP. The active-site Pros-phosphohistidine intermediate is the H117.

This sequence belongs to the NDK family. In terms of assembly, homotetramer. Mg(2+) serves as cofactor.

Its subcellular location is the cytoplasm. It catalyses the reaction a 2'-deoxyribonucleoside 5'-diphosphate + ATP = a 2'-deoxyribonucleoside 5'-triphosphate + ADP. The catalysed reaction is a ribonucleoside 5'-diphosphate + ATP = a ribonucleoside 5'-triphosphate + ADP. Functionally, major role in the synthesis of nucleoside triphosphates other than ATP. The ATP gamma phosphate is transferred to the NDP beta phosphate via a ping-pong mechanism, using a phosphorylated active-site intermediate. The sequence is that of Nucleoside diphosphate kinase from Sinorhizobium fredii (strain NBRC 101917 / NGR234).